The primary structure comprises 179 residues: MATLRKVYREEVTPALKERFGYQNVMQVPQLQKIVINMGLGEATKDKKILEAAQEDLAKIAGQKPVVTRARKSVAGFKIREGWPIGCKVTLRRDRMYEFLERFIHVASPRVRDFRGFSPRSFDGRGNYNLGIREQLIFPEIDYDEIDRVRGMDITVSTTARTDAEGKALLEGFGFPFRT.

Belongs to the universal ribosomal protein uL5 family. Part of the 50S ribosomal subunit; part of the 5S rRNA/L5/L18/L25 subcomplex. Contacts the 5S rRNA and the P site tRNA. Forms a bridge to the 30S subunit in the 70S ribosome.

Functionally, this is one of the proteins that bind and probably mediate the attachment of the 5S RNA into the large ribosomal subunit, where it forms part of the central protuberance. In the 70S ribosome it contacts protein S13 of the 30S subunit (bridge B1b), connecting the 2 subunits; this bridge is implicated in subunit movement. Contacts the P site tRNA; the 5S rRNA and some of its associated proteins might help stabilize positioning of ribosome-bound tRNAs. The protein is Large ribosomal subunit protein uL5 of Halorhodospira halophila (strain DSM 244 / SL1) (Ectothiorhodospira halophila (strain DSM 244 / SL1)).